The primary structure comprises 690 residues: Glycine--tRNA ligase beta subunit (690 aa).

This sequence belongs to the class-II aminoacyl-tRNA synthetase family. As to quaternary structure, tetramer of two alpha and two beta subunits.

Its subcellular location is the cytoplasm. It catalyses the reaction tRNA(Gly) + glycine + ATP = glycyl-tRNA(Gly) + AMP + diphosphate. The polypeptide is Glycine--tRNA ligase beta subunit (Pediococcus pentosaceus (strain ATCC 25745 / CCUG 21536 / LMG 10740 / 183-1w)).